The primary structure comprises 221 residues: Putative adhesin P1-like protein MPN_131 (221 aa).

A compositionally biased stretch (low complexity) spans 13-36 (RYGNNHRGSNSSTSGVTTQGQSQN). Disordered stretches follow at residues 13-51 (RYGN…NVGV) and 90-183 (GWRN…TPSG). Residues 37 to 48 (ASSNEPAPTFSN) show a composition bias toward polar residues. Over residues 130–139 (LKQDKADKSG) the composition is skewed to basic and acidic residues. 2 stretches are compositionally biased toward polar residues: residues 149–160 (SGDNLTNYTNLP) and 174–183 (HSPTRTTPSG).

Belongs to the adhesin P1 family.

The polypeptide is Putative adhesin P1-like protein MPN_131 (Mycoplasma pneumoniae (strain ATCC 29342 / M129 / Subtype 1) (Mycoplasmoides pneumoniae)).